Reading from the N-terminus, the 405-residue chain is MVSIITFTKNVLVTLAFALLAQGLAIPEDIDKRAEKVVSLDFTVTRKPFNATAHGQHHQSQQQQQQQQQQPAQKRGTVQTSLINEGPSYAATITVGSNKQQQTVIVDTGSSDLWVVDSAAVCQVTYPGQSPTFCKQDGTYKPSSSTTSQNLGKAFSIRYEDGSSSQGTVYKDTVGLGGASITNQQFADVTTTSVDQGILGIGFTGDESSPTYDNVPVTLKKQGIINKNAYSLYLNSASASSGTIIFGGVDNAKYTGSLTALPITSSNELRVQLSTINIAGTTVSASTTPVLDSGTTLTYFSQTIADKLAAAVGAKWNSYYQLYTSSCNLAGNIVFNFAKGVTISVPLSEFVLQDGNSCYFGVSRDSATILGDNFLRRAYAVYDLDGNTISLAQVKYTTSSSISTL.

The first 23 residues, 1 to 23 (MVSIITFTKNVLVTLAFALLAQG), serve as a signal peptide directing secretion. Positions 24–75 (LAIPEDIDKRAEKVVSLDFTVTRKPFNATAHGQHHQSQQQQQQQQQQPAQKR) are cleaved as a propeptide — activation peptide. Positions 52 to 78 (TAHGQHHQSQQQQQQQQQQPAQKRGTV) are disordered. Positions 58-70 (HQSQQQQQQQQQQ) are enriched in low complexity. The Peptidase A1 domain occupies 89–392 (YAATITVGSN…DLDGNTISLA (304 aa)). The active site involves aspartate 107. Position 107–109 (107–109 (DTG)) interacts with pepstatin A. A disulfide bridge connects residues cysteine 122 and cysteine 134. Residues 160 to 161 (ED) and 292 to 296 (DSGTT) contribute to the pepstatin A site. The active site involves aspartate 292. The cysteines at positions 327 and 358 are disulfide-linked.

Belongs to the peptidase A1 family. As to quaternary structure, monomer.

The protein localises to the secreted. It catalyses the reaction Preferential cleavage at the carboxyl of hydrophobic amino acids, but fails to cleave 15-Leu-|-Tyr-16, 16-Tyr-|-Leu-17 and 24-Phe-|-Phe-25 of insulin B chain. Activates trypsinogen, and degrades keratin.. Functionally, secreted aspartic peptidases (SAPs) are a group of ten acidic hydrolases considered as key virulence factors. These enzymes supply the fungus with nutrient amino acids as well as are able to degrade the selected host's proteins involved in the immune defense. Moreover, acts toward human hemoglobin though limited proteolysis to generate a variety of antimicrobial hemocidins, enabling to compete with the other microorganisms of the same physiological niche using the microbicidal peptides generated from the host protein. In terms of biological role, plays a key role in defense against host by cleaving histatin-5 (Hst 5), a peptide from human saliva that carries out fungicidal activity. The cleavage rate decreases in an order of SAP2 &gt; SAP9 &gt; SAP3 &gt; SAP7 &gt; SAP4 &gt; SAP1 &gt; SAP8. The hydrolysis of Hst 5 by SAP8 causes production of the DSHAKRHHGY, HHSHRGY and FHEKHHSHRGY peptides. This Candida albicans (strain SC5314 / ATCC MYA-2876) (Yeast) protein is Secreted aspartic protease 8.